The chain runs to 460 residues: Telomere-binding protein homolog (460 aa).

The protein belongs to the telombin family.

The protein resides in the nucleus. The protein localises to the chromosome. It is found in the telomere. In terms of biological role, may bind telomeric T4G4 sequences. The protein is Telomere-binding protein homolog of Euplotes crassus.